Consider the following 915-residue polypeptide: Copper-exporting P-type ATPase (915 aa).

HMA domains follow at residues 11-72 (NHFA…YQGG) and 73-134 (TEQT…YQAI). The Cu(+) site is built by C22, C25, C84, and C87. A disordered region spans residues 142–169 (FAPAASIDEKETDTPDAENSSNTEATEA). A compositionally biased stretch (polar residues) spans 158–169 (AENSSNTEATEA). Residues 172-236 (QTLSLLIKGM…AIQSSGYQAE (65 aa)) form the HMA 3 domain. Cu(+) is bound by residues C183 and C186. The next 7 helical transmembrane spans lie at 265 to 285 (LGIALGTPLMLWGVFGGNMMI), 293 to 313 (VWGGIGTICFALLLTAGRHFF), 329 to 349 (TLVALGTGAAWFYSMLVVAWP), 359 to 379 (VYFEATAMIIGLISLGHYIET), 474 to 494 (LVITATGIGAQTMLARIIQMV), 514 to 534 (VFVPVVVVIAILSAALWYLYG), and 541 to 561 (YMLVVATTVLIIACPCALGLA). D598 acts as the 4-aspartylphosphate intermediate in catalysis. Positions 796 and 800 each coordinate Mg(2+). 2 helical membrane-spanning segments follow: residues 801-821 (APALALADIGIAMGSGSDVAI) and 865-885 (IPIAAGVLYPAFGFLLSPVVA).

This sequence belongs to the cation transport ATPase (P-type) (TC 3.A.3) family. Type IB subfamily.

The protein localises to the cell membrane. It carries out the reaction Cu(+)(in) + ATP + H2O = Cu(+)(out) + ADP + phosphate + H(+). Its function is as follows. Involved in copper export. The polypeptide is Copper-exporting P-type ATPase (copA) (Vibrio cholerae serotype O1 (strain ATCC 39315 / El Tor Inaba N16961)).